A 173-amino-acid chain; its full sequence is Crossover junction endodeoxyribonuclease RuvC (173 aa).

Catalysis depends on residues D8, E67, and D139. Mg(2+)-binding residues include D8, E67, and D139.

Belongs to the RuvC family. As to quaternary structure, homodimer which binds Holliday junction (HJ) DNA. The HJ becomes 2-fold symmetrical on binding to RuvC with unstacked arms; it has a different conformation from HJ DNA in complex with RuvA. In the full resolvosome a probable DNA-RuvA(4)-RuvB(12)-RuvC(2) complex forms which resolves the HJ. Mg(2+) is required as a cofactor.

It localises to the cytoplasm. The enzyme catalyses Endonucleolytic cleavage at a junction such as a reciprocal single-stranded crossover between two homologous DNA duplexes (Holliday junction).. The RuvA-RuvB-RuvC complex processes Holliday junction (HJ) DNA during genetic recombination and DNA repair. Endonuclease that resolves HJ intermediates. Cleaves cruciform DNA by making single-stranded nicks across the HJ at symmetrical positions within the homologous arms, yielding a 5'-phosphate and a 3'-hydroxyl group; requires a central core of homology in the junction. The consensus cleavage sequence is 5'-(A/T)TT(C/G)-3'. Cleavage occurs on the 3'-side of the TT dinucleotide at the point of strand exchange. HJ branch migration catalyzed by RuvA-RuvB allows RuvC to scan DNA until it finds its consensus sequence, where it cleaves and resolves the cruciform DNA. In Aeromonas hydrophila subsp. hydrophila (strain ATCC 7966 / DSM 30187 / BCRC 13018 / CCUG 14551 / JCM 1027 / KCTC 2358 / NCIMB 9240 / NCTC 8049), this protein is Crossover junction endodeoxyribonuclease RuvC.